Consider the following 603-residue polypeptide: Elongation factor 4 (603 aa).

One can recognise a tr-type G domain in the interval 5–187; it reads RHIRNFCIIA…AVVNFVPPPK (183 aa). GTP contacts are provided by residues 17 to 22 and 134 to 137; these read DHGKST and NKID.

The protein belongs to the TRAFAC class translation factor GTPase superfamily. Classic translation factor GTPase family. LepA subfamily.

The protein localises to the cell membrane. The enzyme catalyses GTP + H2O = GDP + phosphate + H(+). Required for accurate and efficient protein synthesis under certain stress conditions. May act as a fidelity factor of the translation reaction, by catalyzing a one-codon backward translocation of tRNAs on improperly translocated ribosomes. Back-translocation proceeds from a post-translocation (POST) complex to a pre-translocation (PRE) complex, thus giving elongation factor G a second chance to translocate the tRNAs correctly. Binds to ribosomes in a GTP-dependent manner. This is Elongation factor 4 from Symbiobacterium thermophilum (strain DSM 24528 / JCM 14929 / IAM 14863 / T).